The primary structure comprises 885 residues: MQERYQPNSVEAAAQQTWQARDAYLVHEHAKNPDGSEKPKFYACSMLPYPSGKLHMGHVRNYTINDMMARQLRMRGYNVLMPMGWDAFGMPAENAAIKSKVPPAKWTYDNIAYMKKQMKAMGLAIDWSREMCACDPKYYKWNQWLFLKMLEKGIAYRKTQVVNWDPVDQTVLANEQVIDGRGWRSGAPVEKREIPGYYLRITDYAEELLDQVSTNLPGWPERVRLMQENWIGKSEGLRFAFPHRIAGADGKLIQDGKLYVFTTRADTIMGVTFCAVAPEHPLATHAAQSNPALAAFVEQCKLGGTTEAEMATREKEGMPTGLTVTHPLTGAEIDVWVGNYVLMTYGDGAVMGVPAHDERDFAFARKYGLPIRQVVALEGKTYSTDAWQEWYGDKQAGRTVNSGKYDGLAYQAAVDTIAADLAAQGLGEKQTTWRLRDWGISRQRYWGTPIPIIHCADCGPVPVPEQDLPVVLPDDLIPDGSGNPLAKNEAFLSCSCPRCGKPARRETDTMDTFVDSSWYFMRYTSPDNDQAMVDARNDYWMPMDQYIGGIEHAVLHLLYARFWTKVMRDLSLLNFDEPFTKLLCQGMVLNHIYSRKTPQGGIEYFWPEEVDNVYDAKGAIVGAKLQRDGSEVNYGGVGTMSKSKNNGVDPQSLIDTLGADTARLFVMFASPPEQTLEWSDSGVEGANRFLRRLWALGYAQREAVGRGLATGADWAQAPAPVKELRREVYGLLKQADYDYQRIQYNTVVSACMKMLNAIDDAPLPEGPAADAARAETLGLLLRVLYPVVPHITWHLWQDLGYAEHLGDLLDAPWPHVDEAALVADEIELMLQVNGKLRGSIRVAAKAPKEDIERIAAAQEEVARFLEGRPPKRVIVVPGKLVNVVG.

The 'HIGH' region motif lies at 48-58 (PYPSGKLHMGH). The 'KMSKS' region signature appears at 639 to 643 (TMSKS). Lysine 642 serves as a coordination point for ATP.

The protein belongs to the class-I aminoacyl-tRNA synthetase family.

The protein resides in the cytoplasm. It catalyses the reaction tRNA(Leu) + L-leucine + ATP = L-leucyl-tRNA(Leu) + AMP + diphosphate. The polypeptide is Leucine--tRNA ligase (Bordetella parapertussis (strain 12822 / ATCC BAA-587 / NCTC 13253)).